A 191-amino-acid polypeptide reads, in one-letter code: Fe/S biogenesis protein NfuA (191 aa).

Residues Cys-149 and Cys-152 each contribute to the [4Fe-4S] cluster site.

This sequence belongs to the NfuA family. Homodimer. The cofactor is [4Fe-4S] cluster.

Functionally, involved in iron-sulfur cluster biogenesis. Binds a 4Fe-4S cluster, can transfer this cluster to apoproteins, and thereby intervenes in the maturation of Fe/S proteins. Could also act as a scaffold/chaperone for damaged Fe/S proteins. In Pectobacterium carotovorum subsp. carotovorum (strain PC1), this protein is Fe/S biogenesis protein NfuA.